The sequence spans 243 residues: Probable transcriptional regulatory protein BRE_29 (243 aa).

Belongs to the TACO1 family.

It localises to the cytoplasm. This is Probable transcriptional regulatory protein BRE_29 from Borrelia recurrentis (strain A1).